A 389-amino-acid polypeptide reads, in one-letter code: S-adenosylmethionine synthase (389 aa).

Residue His19 coordinates ATP. Asp21 serves as a coordination point for Mg(2+). Residue Glu47 participates in K(+) binding. Residues Glu60 and Gln103 each contribute to the L-methionine site. A flexible loop region spans residues 103–113; the sequence is QSVDIAQGVSR. Residues 168–170, 234–235, Asp243, 249–250, Ala266, and Lys270 contribute to the ATP site; these read DGK, RF, and RK. Asp243 is an L-methionine binding site. Lys274 serves as a coordination point for L-methionine.

Belongs to the AdoMet synthase family. As to quaternary structure, homotetramer; dimer of dimers. It depends on Mg(2+) as a cofactor. K(+) is required as a cofactor.

Its subcellular location is the cytoplasm. The catalysed reaction is L-methionine + ATP + H2O = S-adenosyl-L-methionine + phosphate + diphosphate. Its pathway is amino-acid biosynthesis; S-adenosyl-L-methionine biosynthesis; S-adenosyl-L-methionine from L-methionine: step 1/1. Its function is as follows. Catalyzes the formation of S-adenosylmethionine (AdoMet) from methionine and ATP. The overall synthetic reaction is composed of two sequential steps, AdoMet formation and the subsequent tripolyphosphate hydrolysis which occurs prior to release of AdoMet from the enzyme. In Solidesulfovibrio magneticus (strain ATCC 700980 / DSM 13731 / RS-1) (Desulfovibrio magneticus), this protein is S-adenosylmethionine synthase.